Here is a 311-residue protein sequence, read N- to C-terminus: Protein translocase subunit SecF (311 aa).

The next 6 helical transmembrane spans lie at 19-39 (AIYA…TQGL), 142-162 (MLAM…RFEL), 166-186 (LGAV…FSVL), 192-212 (LVVV…TIVV), 245-265 (ITSL…GAVI), and 272-292 (LLFG…PLVL).

The protein belongs to the SecD/SecF family. SecF subfamily. Forms a complex with SecD. Part of the essential Sec protein translocation apparatus which comprises SecA, SecYEG and auxiliary proteins SecDF-YajC and YidC.

Its subcellular location is the cell inner membrane. Part of the Sec protein translocase complex. Interacts with the SecYEG preprotein conducting channel. SecDF uses the proton motive force (PMF) to complete protein translocation after the ATP-dependent function of SecA. In Magnetococcus marinus (strain ATCC BAA-1437 / JCM 17883 / MC-1), this protein is Protein translocase subunit SecF.